A 146-amino-acid chain; its full sequence is COP9 signalosome complex subunit 9 (146 aa).

The region spanning 1–107 (MDSYKTQWLT…SVAREVKVLQ (107 aa)) is the PCI domain.

In terms of assembly, component of a COP9 signalosome-like (CSN) complex.

The protein localises to the cytoplasm. It is found in the nucleus. In terms of biological role, component of the COP9 signalosome (CSN) complex that acts as a regulator of the ubiquitin (Ubl) conjugation pathway by mediating the deneddylation of the cullin subunit of SCF-type E3 ubiquitin-protein ligase complexes. The CSN complex is involved in the regulation of the mating pheromone response. In Candida glabrata (strain ATCC 2001 / BCRC 20586 / JCM 3761 / NBRC 0622 / NRRL Y-65 / CBS 138) (Yeast), this protein is COP9 signalosome complex subunit 9 (CSN9).